The following is an 83-amino-acid chain: Mitochondrial import inner membrane translocase subunit Tim8 B (83 aa).

Ala-2 is modified (N-acetylalanine). Residues 36-59 (CWDKCVEKPGSRLDSRTENCLSSC) carry the Twin CX3C motif motif. Cystine bridges form between Cys-36/Cys-59 and Cys-40/Cys-55.

This sequence belongs to the small Tim family. As to quaternary structure, heterohexamer; possibly composed of 3 copies of TIMM8B and 3 copies of TIMM13, named soluble 70 kDa complex. Associates with the TIM22 complex, whose core is composed of TIMM22.

The protein resides in the mitochondrion inner membrane. Probable mitochondrial intermembrane chaperone that participates in the import and insertion of some multi-pass transmembrane proteins into the mitochondrial inner membrane. Also required for the transfer of beta-barrel precursors from the TOM complex to the sorting and assembly machinery (SAM complex) of the outer membrane. Acts as a chaperone-like protein that protects the hydrophobic precursors from aggregation and guide them through the mitochondrial intermembrane space. The protein is Mitochondrial import inner membrane translocase subunit Tim8 B (Timm8b) of Mus musculus (Mouse).